A 267-amino-acid polypeptide reads, in one-letter code: Diphthine synthase (267 aa).

Residues L9, D85, V88, 113 to 114, L170, A211, and H236 each bind S-adenosyl-L-methionine; that span reads SI.

It belongs to the diphthine synthase family. In terms of assembly, homodimer.

It carries out the reaction 2-[(3S)-amino-3-carboxypropyl]-L-histidyl-[translation elongation factor 2] + 3 S-adenosyl-L-methionine = diphthine-[translation elongation factor 2] + 3 S-adenosyl-L-homocysteine + 3 H(+). It functions in the pathway protein modification; peptidyl-diphthamide biosynthesis. Its function is as follows. S-adenosyl-L-methionine-dependent methyltransferase that catalyzes the trimethylation of the amino group of the modified target histidine residue in translation elongation factor 2 (EF-2), to form an intermediate called diphthine. The three successive methylation reactions represent the second step of diphthamide biosynthesis. This is Diphthine synthase from Methanococcoides burtonii (strain DSM 6242 / NBRC 107633 / OCM 468 / ACE-M).